We begin with the raw amino-acid sequence, 361 residues long: Chorismate synthase (361 aa).

Residues Arg-48 and Arg-54 each coordinate NADP(+). FMN contacts are provided by residues 125-127, 238-239, Gly-278, 293-297, and Arg-319; these read RSS, NA, and KPTSS.

This sequence belongs to the chorismate synthase family. Homotetramer. The cofactor is FMNH2.

The enzyme catalyses 5-O-(1-carboxyvinyl)-3-phosphoshikimate = chorismate + phosphate. It functions in the pathway metabolic intermediate biosynthesis; chorismate biosynthesis; chorismate from D-erythrose 4-phosphate and phosphoenolpyruvate: step 7/7. Catalyzes the anti-1,4-elimination of the C-3 phosphate and the C-6 proR hydrogen from 5-enolpyruvylshikimate-3-phosphate (EPSP) to yield chorismate, which is the branch point compound that serves as the starting substrate for the three terminal pathways of aromatic amino acid biosynthesis. This reaction introduces a second double bond into the aromatic ring system. The protein is Chorismate synthase of Proteus mirabilis (strain HI4320).